The chain runs to 340 residues: Ketol-acid reductoisomerase (NADP(+)) (340 aa).

A KARI N-terminal Rossmann domain is found at 2–182 (ANIYYENHAD…GCTRAGVIET (181 aa)). NADP(+) is bound by residues 25-28 (FGSQ), Ser-51, Ser-53, and 83-86 (DTAQ). His-108 is an active-site residue. Gly-134 serves as a coordination point for NADP(+). A KARI C-terminal knotted domain is found at 183–328 (TFAEETETDL…RELRRMMPFV (146 aa)). The Mg(2+) site is built by Asp-191, Glu-195, Glu-227, and Glu-231. Ser-252 is a substrate binding site.

The protein belongs to the ketol-acid reductoisomerase family. It depends on Mg(2+) as a cofactor.

It catalyses the reaction (2R)-2,3-dihydroxy-3-methylbutanoate + NADP(+) = (2S)-2-acetolactate + NADPH + H(+). The catalysed reaction is (2R,3R)-2,3-dihydroxy-3-methylpentanoate + NADP(+) = (S)-2-ethyl-2-hydroxy-3-oxobutanoate + NADPH + H(+). It participates in amino-acid biosynthesis; L-isoleucine biosynthesis; L-isoleucine from 2-oxobutanoate: step 2/4. Its pathway is amino-acid biosynthesis; L-valine biosynthesis; L-valine from pyruvate: step 2/4. Functionally, involved in the biosynthesis of branched-chain amino acids (BCAA). Catalyzes an alkyl-migration followed by a ketol-acid reduction of (S)-2-acetolactate (S2AL) to yield (R)-2,3-dihydroxy-isovalerate. In the isomerase reaction, S2AL is rearranged via a Mg-dependent methyl migration to produce 3-hydroxy-3-methyl-2-ketobutyrate (HMKB). In the reductase reaction, this 2-ketoacid undergoes a metal-dependent reduction by NADPH to yield (R)-2,3-dihydroxy-isovalerate. This Roseiflexus castenholzii (strain DSM 13941 / HLO8) protein is Ketol-acid reductoisomerase (NADP(+)).